A 187-amino-acid chain; its full sequence is uncharacterized protein (187 aa).

The disordered stretch occupies residues 131 to 187; the sequence is VAEKKDQRKKKPKVKTQGENAPVAKSAGENSGKLEEQKDERKGIAKDIDDFFGGIDG. Residues 162–179 show a composition bias toward basic and acidic residues; that stretch reads GKLEEQKDERKGIAKDID.

This is an uncharacterized protein from Haemophilus influenzae (Bacteriophage HP1).